The following is a 592-amino-acid chain: Sodium- and chloride-dependent transporter XTRP3A (592 aa).

The Cytoplasmic segment spans residues 1 to 7 (MEKARPQ). Residues 8–28 (WGHPLQFVFACISYAVGLGNV) traverse the membrane as a helical segment. Residues 29 to 42 (WRFPYLCQMYGGGS) are Extracellular-facing. A helical membrane pass occupies residues 43–63 (FLVPYIIMLIVEGMPLLYLEL). Topologically, residues 64–79 (AVGQRMRQGSIGAWRT) are cytoplasmic. A helical membrane pass occupies residues 80 to 100 (ISPYLSGVGVASVVVSFFLSM). The Extracellular portion of the chain corresponds to 101-165 (YYNVINAWGF…ISPSIQENGG (65 aa)). Residue Asn131 is glycosylated (N-linked (GlcNAc...) asparagine). Residues 166–186 (VQWEPALCLTLAWLMVYLCIL) traverse the membrane as a helical segment. Topologically, residues 187–194 (RGTESTGK) are cytoplasmic. The helical transmembrane segment at 195-215 (VVYFTASMPYCVLIIYLVRGL) threads the bilayer. Topologically, residues 216–241 (TLHGATNGLMYMFTPKMEQLANPKAW) are extracellular. Residues 242 to 262 (INAATQIFFSLGLGFGSLIAF) form a helical membrane-spanning segment. Topologically, residues 263–276 (ASYNEPSNNCQKHA) are cytoplasmic. The helical transmembrane segment at 277-297 (IIVSIINSSTSIFASIVTFSI) threads the bilayer. The Extracellular portion of the chain corresponds to 298-389 (YGFKATFNYE…EAIKNMEVSQ (92 aa)). A helical transmembrane segment spans residues 390–410 (LWSVLYFFMLLMLGIGSMLGN). The Cytoplasmic portion of the chain corresponds to 411-431 (TAAILTPLTDSKVISSYLPKE). The chain crosses the membrane as a helical span at residues 432–452 (AISGLVCLINCAVGMVFTMEA). The Extracellular portion of the chain corresponds to 453–465 (GNYWFDIFNDYAA). Residues 466 to 486 (TLSLLLIVLVETIAVCYVYGL) form a helical membrane-spanning segment. Topologically, residues 487–504 (KRFESDLRAMTGRTLSWY) are cytoplasmic. A helical membrane pass occupies residues 505 to 525 (WKVMWAFVSPLLIVGLFIFYL). Over 526 to 554 (SDYILTGTLQYQAWDATQGQLVTKDYPPH) the chain is Extracellular. The helical transmembrane segment at 555-575 (ALAVIGLLVASSTMCIPLVAL) threads the bilayer. The Cytoplasmic portion of the chain corresponds to 576 to 592 (GTFIRNRLKRGGSAPVA).

It belongs to the sodium:neurotransmitter symporter (SNF) (TC 2.A.22) family. SLC6A20 subfamily. As to expression, expressed in brain, kidney, small intestine, thymus, spleen and lung. In the brain, expressed in cerebellum, cortex and brain stem. Not detected in liver, muscle or heart. In brain, widespread in various regions, including the meninges, choroid plexus, cortex, hippocampus and thalamus.

The protein localises to the apical cell membrane. The enzyme catalyses L-proline(out) + chloride(out) + 2 Na(+)(out) = L-proline(in) + chloride(in) + 2 Na(+)(in). It carries out the reaction 4-hydroxy-L-proline(out) + chloride(out) + 2 Na(+)(out) = 4-hydroxy-L-proline(in) + chloride(in) + 2 Na(+)(in). It catalyses the reaction 2-methyl-2-(methylamino)propanoate(out) + chloride(out) + 2 Na(+)(out) = 2-methyl-2-(methylamino)propanoate(in) + chloride(in) + 2 Na(+)(in). The catalysed reaction is L-pipecolate(out) + chloride(out) + 2 Na(+)(out) = L-pipecolate(in) + chloride(in) + 2 Na(+)(in). The enzyme catalyses glycine betaine(out) + chloride(out) + 2 Na(+)(out) = glycine betaine(in) + chloride(in) + 2 Na(+)(in). It carries out the reaction glycine(out) + chloride(out) + 2 Na(+)(out) = glycine(in) + chloride(in) + 2 Na(+)(in). Its function is as follows. Mediates the Na(+)- and Cl(-)-dependent uptake of imino acids such as L-proline, N-methyl-L-proline and pipecolate as well as N-methylated amino acids. Also transports glycine, regulates proline and glycine homeostasis in the brain playing a role in the modulation of NMDAR currents. The sequence is that of Sodium- and chloride-dependent transporter XTRP3A from Mus musculus (Mouse).